We begin with the raw amino-acid sequence, 721 residues long: BBSome complex member bbs-7 (721 aa).

As to quaternary structure, part of BBSome complex, that contains at least bbs-1, bbs-2, bbs-4, bbs-5, osm-12, bbs-8/ttc-8 and bbs-9. Interacts with bbs-1. In terms of tissue distribution, expressed in ciliated cells including amphid and both inner and outer labial neurons of the head and in both phasmid neurons PHA and PHB in the tail at larval stages L1 and L2.

Its subcellular location is the cell projection. It is found in the cilium. The protein resides in the cytoplasm. It localises to the cytoskeleton. The protein localises to the cilium basal body. Its subcellular location is the cilium axoneme. Functionally, component of the BBSome complex. The BBSome complex is thought to function as a coat complex required for sorting of specific membrane proteins to the primary cilia. The BBSome complex is required for ciliogenesis but is dispensable for centriolar satellite function. Required for proper BBSome complex assembly and its ciliary localization. Required for cilia biogenesis and both the assembly and movement of intraflagellar transport proteins along the ciliary axoneme. Plays a role in the removal of degraded mechanosensory receptors within the cilia. Plays a role in guanylyl cyclase localization in the ring-like structures at the base of the finger compartment in AFD sensory neurons. In ciliated sensory neurons, required for the sensation of nitric oxide and avoidance of NO-producing organisms like P.aeruginosa. This chain is BBSome complex member bbs-7, found in Caenorhabditis elegans.